The primary structure comprises 188 residues: GTP cyclohydrolase 1 (188 aa).

Residues C76, H79, and C148 each contribute to the Zn(2+) site.

Belongs to the GTP cyclohydrolase I family. Toroid-shaped homodecamer, composed of two pentamers of five dimers.

It carries out the reaction GTP + H2O = 7,8-dihydroneopterin 3'-triphosphate + formate + H(+). Its pathway is cofactor biosynthesis; 7,8-dihydroneopterin triphosphate biosynthesis; 7,8-dihydroneopterin triphosphate from GTP: step 1/1. The protein is GTP cyclohydrolase 1 of Caldanaerobacter subterraneus subsp. tengcongensis (strain DSM 15242 / JCM 11007 / NBRC 100824 / MB4) (Thermoanaerobacter tengcongensis).